The sequence spans 184 residues: MTRYSVQSVDPTKTASARGAYLRTSFKNTYEVAGAIRGWNLQKALAYLDQVTDHKRAIPFRKHAGSIGRTGQGKEFGVTKARWPVKSIKFVQDLLQNAQANAETKGLDKETLVISHIQVNQAPKQRRRTYRAHGRINAYQSSPSHIELILSEPAEEIAKAKETSLAHISSRQRGRIAAQKRISA.

It belongs to the universal ribosomal protein uL22 family.

The sequence is that of Large ribosomal subunit protein uL22 (RPL17) from Yarrowia lipolytica (strain CLIB 122 / E 150) (Yeast).